The chain runs to 428 residues: Serine--tRNA ligase (428 aa).

231–233 (TAE) contributes to the L-serine binding site. 262–264 (RSE) contacts ATP. Glu285 lines the L-serine pocket. Residue 349–352 (EISS) coordinates ATP. Position 385 (Ser385) interacts with L-serine.

It belongs to the class-II aminoacyl-tRNA synthetase family. Type-1 seryl-tRNA synthetase subfamily. In terms of assembly, homodimer. The tRNA molecule binds across the dimer.

The protein localises to the cytoplasm. The enzyme catalyses tRNA(Ser) + L-serine + ATP = L-seryl-tRNA(Ser) + AMP + diphosphate + H(+). It carries out the reaction tRNA(Sec) + L-serine + ATP = L-seryl-tRNA(Sec) + AMP + diphosphate + H(+). It functions in the pathway aminoacyl-tRNA biosynthesis; selenocysteinyl-tRNA(Sec) biosynthesis; L-seryl-tRNA(Sec) from L-serine and tRNA(Sec): step 1/1. In terms of biological role, catalyzes the attachment of serine to tRNA(Ser). Is also able to aminoacylate tRNA(Sec) with serine, to form the misacylated tRNA L-seryl-tRNA(Sec), which will be further converted into selenocysteinyl-tRNA(Sec). The protein is Serine--tRNA ligase of Staphylococcus aureus (strain MRSA252).